The chain runs to 156 residues: 6,7-dimethyl-8-ribityllumazine synthase (156 aa).

Residues Phe23, 57–59 (SFE), and 81–83 (AVI) each bind 5-amino-6-(D-ribitylamino)uracil. 86–87 (GT) lines the (2S)-2-hydroxy-3-oxobutyl phosphate pocket. His89 functions as the Proton donor in the catalytic mechanism. 5-amino-6-(D-ribitylamino)uracil is bound at residue Phe114. Arg128 contributes to the (2S)-2-hydroxy-3-oxobutyl phosphate binding site.

The protein belongs to the DMRL synthase family. Forms an icosahedral capsid composed of 60 subunits, arranged as a dodecamer of pentamers.

It carries out the reaction (2S)-2-hydroxy-3-oxobutyl phosphate + 5-amino-6-(D-ribitylamino)uracil = 6,7-dimethyl-8-(1-D-ribityl)lumazine + phosphate + 2 H2O + H(+). It participates in cofactor biosynthesis; riboflavin biosynthesis; riboflavin from 2-hydroxy-3-oxobutyl phosphate and 5-amino-6-(D-ribitylamino)uracil: step 1/2. In terms of biological role, catalyzes the formation of 6,7-dimethyl-8-ribityllumazine by condensation of 5-amino-6-(D-ribitylamino)uracil with 3,4-dihydroxy-2-butanone 4-phosphate. This is the penultimate step in the biosynthesis of riboflavin. The polypeptide is 6,7-dimethyl-8-ribityllumazine synthase (Alkalilimnicola ehrlichii (strain ATCC BAA-1101 / DSM 17681 / MLHE-1)).